The chain runs to 287 residues: Glutamate racemase (287 aa).

Substrate contacts are provided by residues 32-33 (DS) and 64-65 (YG). Residue Cys96 is the Proton donor/acceptor of the active site. Substrate is bound at residue 97–98 (NT). Cys208 functions as the Proton donor/acceptor in the catalytic mechanism. 209-210 (TH) is a binding site for substrate.

Belongs to the aspartate/glutamate racemases family.

The catalysed reaction is L-glutamate = D-glutamate. It participates in cell wall biogenesis; peptidoglycan biosynthesis. Functionally, provides the (R)-glutamate required for cell wall biosynthesis. The chain is Glutamate racemase from Yersinia enterocolitica serotype O:8 / biotype 1B (strain NCTC 13174 / 8081).